Consider the following 288-residue polypeptide: 33 kDa chaperonin (288 aa).

Cystine bridges form between Cys-225/Cys-227 and Cys-258/Cys-261.

Belongs to the HSP33 family. Post-translationally, under oxidizing conditions two disulfide bonds are formed involving the reactive cysteines. Under reducing conditions zinc is bound to the reactive cysteines and the protein is inactive.

It localises to the cytoplasm. Redox regulated molecular chaperone. Protects both thermally unfolding and oxidatively damaged proteins from irreversible aggregation. Plays an important role in the bacterial defense system toward oxidative stress. The polypeptide is 33 kDa chaperonin (Shewanella denitrificans (strain OS217 / ATCC BAA-1090 / DSM 15013)).